We begin with the raw amino-acid sequence, 469 residues long: Aspartyl/glutamyl-tRNA(Asn/Gln) amidotransferase subunit B (469 aa).

The protein belongs to the GatB/GatE family. GatB subfamily. In terms of assembly, heterotrimer of A, B and C subunits.

It carries out the reaction L-glutamyl-tRNA(Gln) + L-glutamine + ATP + H2O = L-glutaminyl-tRNA(Gln) + L-glutamate + ADP + phosphate + H(+). It catalyses the reaction L-aspartyl-tRNA(Asn) + L-glutamine + ATP + H2O = L-asparaginyl-tRNA(Asn) + L-glutamate + ADP + phosphate + 2 H(+). Allows the formation of correctly charged Asn-tRNA(Asn) or Gln-tRNA(Gln) through the transamidation of misacylated Asp-tRNA(Asn) or Glu-tRNA(Gln) in organisms which lack either or both of asparaginyl-tRNA or glutaminyl-tRNA synthetases. The reaction takes place in the presence of glutamine and ATP through an activated phospho-Asp-tRNA(Asn) or phospho-Glu-tRNA(Gln). The polypeptide is Aspartyl/glutamyl-tRNA(Asn/Gln) amidotransferase subunit B (Methanococcus maripaludis (strain DSM 14266 / JCM 13030 / NBRC 101832 / S2 / LL)).